The following is a 1373-amino-acid chain: DNA-directed RNA polymerase subunit beta'' (1373 aa).

Zn(2+)-binding residues include C220, C293, C300, and C303.

This sequence belongs to the RNA polymerase beta' chain family. RpoC2 subfamily. As to quaternary structure, in plastids the minimal PEP RNA polymerase catalytic core is composed of four subunits: alpha, beta, beta', and beta''. When a (nuclear-encoded) sigma factor is associated with the core the holoenzyme is formed, which can initiate transcription. Requires Zn(2+) as cofactor.

The protein localises to the plastid. It is found in the chloroplast. It carries out the reaction RNA(n) + a ribonucleoside 5'-triphosphate = RNA(n+1) + diphosphate. Its function is as follows. DNA-dependent RNA polymerase catalyzes the transcription of DNA into RNA using the four ribonucleoside triphosphates as substrates. The protein is DNA-directed RNA polymerase subunit beta'' of Lepidium virginicum (Virginia pepperweed).